Reading from the N-terminus, the 806-residue chain is GPI ethanolamine phosphate transferase 2 (806 aa).

N-linked (GlcNAc...) asparagine glycosylation is found at N70, N184, and N242. The next 3 membrane-spanning stretches (helical) occupy residues 396–416 (MLFLGVGMLSIVTAATAYCYI), 425–445 (SVLMIAVTALLGSSVFGSSFV), and 451–471 (IWWWIIIAVVGYSWATRPSCT). A glycan (N-linked (GlcNAc...) asparagine) is linked at N488. The next 8 membrane-spanning stretches (helical) occupy residues 508–528 (PSIKWLLVCATLAVVALDGFT), 532–552 (LLSIFNLLAGLLCFVYKTCWA), 593–613 (LFFKVTAAIVCMRIAYNVVFA), 624–644 (LFTIVLIMQTASQNIPLFLVF), 664–684 (CEMFFVLSLILQNLSFFQFGG), 706–726 (IYVVGLLMCIGNMAPAIYWSL), 745–765 (LSSMFFYSVNSLLLLVACICM), and 782–804 (LLGWNILIHFLTETVLEPFLLMV).

Belongs to the PIGG/PIGN/PIGO family. PIGG subfamily.

Its subcellular location is the endoplasmic reticulum membrane. The protein operates within glycolipid biosynthesis; glycosylphosphatidylinositol-anchor biosynthesis. Ethanolamine phosphate transferase involved in glycosylphosphatidylinositol-anchor biosynthesis. Transfers ethanolamine phosphate to the GPI second mannose. This chain is GPI ethanolamine phosphate transferase 2 (LAS21), found in Eremothecium gossypii (strain ATCC 10895 / CBS 109.51 / FGSC 9923 / NRRL Y-1056) (Yeast).